The sequence spans 208 residues: Inner membrane-spanning protein YciB (208 aa).

Transmembrane regions (helical) follow at residues Ala49–Leu69, Thr78–His98, Trp105–Phe125, Phe150–Phe170, and Phe178–Leu198.

The protein belongs to the YciB family.

The protein resides in the cell inner membrane. Plays a role in cell envelope biogenesis, maintenance of cell envelope integrity and membrane homeostasis. This chain is Inner membrane-spanning protein YciB, found in Polaromonas naphthalenivorans (strain CJ2).